A 202-amino-acid chain; its full sequence is Pyridoxal 5'-phosphate synthase subunit PdxT (202 aa).

48-50 (GES) is a binding site for L-glutamine. The active-site Nucleophile is the cysteine 80. Residues arginine 112 and 139–140 (IR) each bind L-glutamine. Catalysis depends on charge relay system residues histidine 180 and glutamate 182.

Belongs to the glutaminase PdxT/SNO family. In the presence of PdxS, forms a dodecamer of heterodimers. Only shows activity in the heterodimer.

The enzyme catalyses aldehydo-D-ribose 5-phosphate + D-glyceraldehyde 3-phosphate + L-glutamine = pyridoxal 5'-phosphate + L-glutamate + phosphate + 3 H2O + H(+). The catalysed reaction is L-glutamine + H2O = L-glutamate + NH4(+). It participates in cofactor biosynthesis; pyridoxal 5'-phosphate biosynthesis. Functionally, catalyzes the hydrolysis of glutamine to glutamate and ammonia as part of the biosynthesis of pyridoxal 5'-phosphate. The resulting ammonia molecule is channeled to the active site of PdxS. The protein is Pyridoxal 5'-phosphate synthase subunit PdxT of Hyperthermus butylicus (strain DSM 5456 / JCM 9403 / PLM1-5).